A 236-amino-acid polypeptide reads, in one-letter code: Eukaryotic translation initiation factor 3 subunit J (236 aa).

The disordered stretch occupies residues 20–88; that stretch reads ANNINKWEGE…AEEEKRLANL (69 aa). Over residues 28–46 the composition is skewed to acidic residues; it reads GEDDDEDVKESWEDEEEKK. 2 stretches are compositionally biased toward basic and acidic residues: residues 47 to 58 and 68 to 88; these read DEEKPTKTEVPV and AKLE…LANL.

It belongs to the eIF-3 subunit J family. In terms of assembly, component of the eukaryotic translation initiation factor 3 (eIF-3) complex. The eIF-3 complex interacts with pix.

The protein localises to the cytoplasm. Component of the eukaryotic translation initiation factor 3 (eIF-3) complex, which is involved in protein synthesis of a specialized repertoire of mRNAs and, together with other initiation factors, stimulates binding of mRNA and methionyl-tRNAi to the 40S ribosome. The eIF-3 complex specifically targets and initiates translation of a subset of mRNAs involved in cell proliferation. This Drosophila willistoni (Fruit fly) protein is Eukaryotic translation initiation factor 3 subunit J.